Reading from the N-terminus, the 536-residue chain is Chaperonin GroEL (536 aa).

Residues Thr30 to Pro33, Asp86 to Thr90, Gly414, and Asp494 each bind ATP.

The protein belongs to the chaperonin (HSP60) family. As to quaternary structure, forms a cylinder of 14 subunits composed of two heptameric rings stacked back-to-back. Interacts with the co-chaperonin GroES.

It is found in the cytoplasm. The enzyme catalyses ATP + H2O + a folded polypeptide = ADP + phosphate + an unfolded polypeptide.. Its function is as follows. Together with its co-chaperonin GroES, plays an essential role in assisting protein folding. The GroEL-GroES system forms a nano-cage that allows encapsulation of the non-native substrate proteins and provides a physical environment optimized to promote and accelerate protein folding. This Methanospirillum hungatei JF-1 (strain ATCC 27890 / DSM 864 / NBRC 100397 / JF-1) protein is Chaperonin GroEL.